Consider the following 602-residue polypeptide: DEAD-box ATP-dependent RNA helicase 52A (602 aa).

The tract at residues 9–31 (KSVEAGGEPGGGGGGAWSTVSRS) is disordered. Residues 15–24 (GEPGGGGGGA) show a composition bias toward gly residues. Residues 84 to 112 (DGFEAAGLVEAVLRNVARCGYESPTPVQR) carry the Q motif motif. Residues 115 to 305 (MPIALAGRDL…SDFLSNYIFI (191 aa)) enclose the Helicase ATP-binding domain. 128–135 (AQTGSGKT) lines the ATP pocket. The DEAD box signature appears at 249-252 (DEAD). Positions 328 to 485 (EKRGYLLDLL…DVPDWLVQYA (158 aa)) constitute a Helicase C-terminal domain. 2 disordered regions span residues 492-521 (GSSY…SGGG) and 552-602 (RGGG…SGWD). Gly residues predominate over residues 552–574 (RGGGYSRGGRGGYSGGGGGGGGD).

Belongs to the DEAD box helicase family. DDX3/DED1 subfamily.

The catalysed reaction is ATP + H2O = ADP + phosphate + H(+). The sequence is that of DEAD-box ATP-dependent RNA helicase 52A from Oryza sativa subsp. japonica (Rice).